The following is a 185-amino-acid chain: ATP synthase subunit b 1 (185 aa).

Residues 4-24 (TLAIALTLATTSPAFAAGGGW) traverse the membrane as a helical segment.

It belongs to the ATPase B chain family. As to quaternary structure, F-type ATPases have 2 components, F(1) - the catalytic core - and F(0) - the membrane proton channel. F(1) has five subunits: alpha(3), beta(3), gamma(1), delta(1), epsilon(1). F(0) has three main subunits: a(1), b(2) and c(10-14). The alpha and beta chains form an alternating ring which encloses part of the gamma chain. F(1) is attached to F(0) by a central stalk formed by the gamma and epsilon chains, while a peripheral stalk is formed by the delta and b chains.

It is found in the cell inner membrane. Its function is as follows. F(1)F(0) ATP synthase produces ATP from ADP in the presence of a proton or sodium gradient. F-type ATPases consist of two structural domains, F(1) containing the extramembraneous catalytic core and F(0) containing the membrane proton channel, linked together by a central stalk and a peripheral stalk. During catalysis, ATP synthesis in the catalytic domain of F(1) is coupled via a rotary mechanism of the central stalk subunits to proton translocation. Component of the F(0) channel, it forms part of the peripheral stalk, linking F(1) to F(0). This is ATP synthase subunit b 1 from Ruegeria sp. (strain TM1040) (Silicibacter sp.).